The sequence spans 319 residues: MNSSKSLRIVFAGTSQFSYEFLYALLESRHVVVGILANPDRFSGRGHKIKFSPVKKLAKYYNIKILQPDSTESLDNLENDLKKMRCDIIIVVSYSIILSKKILSLPRLGCINLHSSLLPRWRGAAPIHRALQSGDKTTGITIIKMNDEIDTGPILYKRVCSIQDTDTTETLLNKLSIIGKAAIIQLLHQISIGKYNLQYQNNSIATYAKKINKKEAKINWNLPAINIDRNIRAFNPWPVSYFWISGKYIRAWKAKIDINNIFISDPGKILNVNSDGIHVGTGKGILILEVLQLSGKKRSFVKESLCLYKKLFITGNIIQ.

Residue 116-119 (SLLP) participates in (6S)-5,6,7,8-tetrahydrofolate binding.

The protein belongs to the Fmt family.

It carries out the reaction L-methionyl-tRNA(fMet) + (6R)-10-formyltetrahydrofolate = N-formyl-L-methionyl-tRNA(fMet) + (6S)-5,6,7,8-tetrahydrofolate + H(+). Attaches a formyl group to the free amino group of methionyl-tRNA(fMet). The formyl group appears to play a dual role in the initiator identity of N-formylmethionyl-tRNA by promoting its recognition by IF2 and preventing the misappropriation of this tRNA by the elongation apparatus. This chain is Methionyl-tRNA formyltransferase, found in Wigglesworthia glossinidia brevipalpis.